Here is a 222-residue protein sequence, read N- to C-terminus: 7-cyano-7-deazaguanine synthase (222 aa).

ATP is bound at residue 7–17 (LSGGMDSAVAT). Residues Cys-188, Cys-196, Cys-199, and Cys-202 each contribute to the Zn(2+) site.

This sequence belongs to the QueC family. Zn(2+) is required as a cofactor.

The catalysed reaction is 7-carboxy-7-deazaguanine + NH4(+) + ATP = 7-cyano-7-deazaguanine + ADP + phosphate + H2O + H(+). It participates in purine metabolism; 7-cyano-7-deazaguanine biosynthesis. Functionally, catalyzes the ATP-dependent conversion of 7-carboxy-7-deazaguanine (CDG) to 7-cyano-7-deazaguanine (preQ(0)). This chain is 7-cyano-7-deazaguanine synthase, found in Methanothermobacter thermautotrophicus (strain ATCC 29096 / DSM 1053 / JCM 10044 / NBRC 100330 / Delta H) (Methanobacterium thermoautotrophicum).